A 457-amino-acid chain; its full sequence is ERV-H1 provirus ancestral Env polyprotein (457 aa).

The first 35 residues, 1 to 35, serve as a signal peptide directing secretion; that stretch reads MIFAGKAPSNTSTLMKFYSLILYSLLFSFPFLCHP. N10 and N47 each carry an N-linked (GlcNAc...) asparagine glycan. A CXXC motif is present at residues 64-67; sequence CWLC. Residues N197, N222, N265, N283, N352, and N370 are each glycosylated (N-linked (GlcNAc...) asparagine). The interval 388–408 is fusion peptide; sequence VIPLIPLMFGLGLSASTIALS.

The protein belongs to the gamma type-C retroviral envelope protein family. HERV class-I H env subfamily. In terms of assembly, the surface (SU) and transmembrane (TM) proteins form a heterodimer. SU and TM are attached by noncovalent interactions or by a labile interchain disulfide bond. Post-translationally, specific enzymatic cleavages in vivo yield the mature SU and TM proteins. In terms of processing, the CXXC motif is highly conserved across a broad range of retroviral envelope proteins. It is thought to participate in the formation of a labile disulfide bond possibly with the CX6CC motif present in the transmembrane protein.

Its subcellular location is the virion. Its function is as follows. Retroviral envelope proteins mediate receptor recognition and membrane fusion during early infection. Endogenous envelope proteins may have kept, lost or modified their original function during evolution. In terms of biological role, SU mediates receptor recognition. TM anchors the envelope heterodimer to the viral membrane through one transmembrane domain. The other hydrophobic domain, called fusion peptide, mediates fusion of the viral membrane with the target cell membrane. The polypeptide is ERV-H1 provirus ancestral Env polyprotein (Pan troglodytes (Chimpanzee)).